A 1124-amino-acid chain; its full sequence is Zinc finger E-box-binding homeobox 1 (1124 aa).

2 disordered regions span residues 1–124 and 142–163; these read MADG…NHDP and APEE…NGTP. Low complexity predominate over residues 18–30; sequence NNVTNYNTVVETN. Phosphoserine occurs at positions 31 and 33. Acidic residues predominate over residues 44–62; sequence EESVTDAADCEGVPEDDLP. Basic and acidic residues predominate over residues 72–91; that stretch reads SSEREGNAKNCWEDDRKEGQ. The segment at 170–193 adopts a C2H2-type 1 zinc-finger fold; that stretch reads LTCPYCDRGYKRFTSLKEHIKYRH. Residues K186 and K195 each participate in a glycyl lysine isopeptide (Lys-Gly) (interchain with G-Cter in SUMO2) cross-link. 2 C2H2-type zinc fingers span residues 200–222 and 240–262; these read FSCS…MTSH and FKCT…LRIH. Residues 268–292 form a C2H2-type 4; atypical zinc finger; sequence YECPNCKKRFSHSGSYSSHISSKKC. The disordered stretch occupies residues 304–327; it reads TGLKTSQCSSPSLSASPGSPTRPQ. A Glycyl lysine isopeptide (Lys-Gly) (interchain with G-Cter in SUMO2) cross-link involves residue K307. Positions 309–322 are enriched in low complexity; the sequence is SQCSSPSLSASPGS. 2 positions are modified to phosphoserine: S313 and S322. Glycyl lysine isopeptide (Lys-Gly) (interchain with G-Cter in SUMO2) cross-links involve residues K331 and K335. Residue K347 forms a Glycyl lysine isopeptide (Lys-Gly) (interchain with G-Cter in SUMO); alternate linkage. Residue K347 forms a Glycyl lysine isopeptide (Lys-Gly) (interchain with G-Cter in SUMO2); alternate linkage. Residues K439, K493, K504, K515, K548, and K553 each participate in a glycyl lysine isopeptide (Lys-Gly) (interchain with G-Cter in SUMO2) cross-link. Disordered stretches follow at residues 551-586 and 636-714; these read DLKQ…SPSQ and QISV…SSSR. Residues 581 to 640 constitute a DNA-binding region (homeobox; atypical); that stretch reads NLSPSQPPLKNLLSLLKAYYALNAQPSAEELSKIADSVNLPLDVVKKWFEKMQAGQISVQ. S642, S679, S686, S693, and S700 each carry phosphoserine. Positions 656–687 are enriched in polar residues; that stretch reads AKNNDQPQSANANEPQDSTVNLQSPLKMTNSP. The segment covering 692-714 has biased composition (low complexity); sequence GSTTNGSRSSTPSPSPLNLSSSR. At T702 the chain carries Phosphothreonine. Phosphoserine is present on S704. A Glycyl lysine isopeptide (Lys-Gly) (interchain with G-Cter in SUMO); alternate cross-link involves residue K774. Residue K774 forms a Glycyl lysine isopeptide (Lys-Gly) (interchain with G-Cter in SUMO2); alternate linkage. The disordered stretch occupies residues 856-898; the sequence is PPLKVIQPNGNQDERQDTSSEGVSNVEDQNDSDSTPPKKKMRK. Over residues 874 to 890 the composition is skewed to polar residues; it reads SSEGVSNVEDQNDSDST. 2 consecutive C2H2-type zinc fingers follow at residues 904-926 and 932-954; these read YACD…KYEH and HECG…MRLH. A C2H2-type 7; atypical zinc finger spans residues 960-981; the sequence is YQCDKCGKRFSHSGSYSQHMNH. The tract at residues 989-1124 is disordered; the sequence is EAEERDSTEQ…QVSEEKTNEA (136 aa). Composition is skewed to acidic residues over residues 1031 to 1052 and 1062 to 1084; these read EEDE…ELQE and DEEE…ENEG. Residues 1085–1099 are compositionally biased toward basic and acidic residues; the sequence is EEAKTEGLMKDDRAE. A compositionally biased stretch (polar residues) spans 1100-1115; that stretch reads SQASSLGQKVGESSEQ.

It belongs to the delta-EF1/ZFH-1 C2H2-type zinc-finger family. As to quaternary structure, interacts (via N-terminus) with SMARCA4/BRG1. In terms of processing, ubiquitinated, leading to degradation in a proteasome-dependent manner. Deubiquitinated by USP51, leading to stabilization. As to expression, colocalizes with SMARCA4/BRG1 in E-cadherin-negative cells from established lines, and stroma of normal colon as well as in de-differentiated epithelial cells at the invasion front of colorectal carcinomas (at protein level). Expressed in heart and skeletal muscle, but not in liver, spleen, or pancreas.

It is found in the nucleus. Functionally, acts as a transcriptional repressor. Inhibits interleukin-2 (IL-2) gene expression. Enhances or represses the promoter activity of the ATP1A1 gene depending on the quantity of cDNA and on the cell type. Represses E-cadherin promoter and induces an epithelial-mesenchymal transition (EMT) by recruiting SMARCA4/BRG1. Represses BCL6 transcription in the presence of the corepressor CTBP1. Positively regulates neuronal differentiation. Represses RCOR1 transcription activation during neurogenesis. Represses transcription by binding to the E box (5'-CANNTG-3'). In the absence of TGFB1, acts as a repressor of COL1A2 transcription via binding to the E-box in the upstream enhancer region. The polypeptide is Zinc finger E-box-binding homeobox 1 (Homo sapiens (Human)).